Reading from the N-terminus, the 376-residue chain is Methionine import ATP-binding protein MetN 2 (376 aa).

The disordered stretch occupies residues 1–25; sequence MTATAQRQRPIDTTGAGQRAQQAEL. The region spanning 34-273 is the ABC transporter domain; it reads VRFINLGKTY…PQHEVSKTLL (240 aa). 70–77 is a binding site for ATP; the sequence is GRSGAGKS.

This sequence belongs to the ABC transporter superfamily. Methionine importer (TC 3.A.1.24) family. The complex is composed of two ATP-binding proteins (MetN), two transmembrane proteins (MetI) and a solute-binding protein (MetQ).

It is found in the cell inner membrane. The enzyme catalyses L-methionine(out) + ATP + H2O = L-methionine(in) + ADP + phosphate + H(+). It catalyses the reaction D-methionine(out) + ATP + H2O = D-methionine(in) + ADP + phosphate + H(+). In terms of biological role, part of the ABC transporter complex MetNIQ involved in methionine import. Responsible for energy coupling to the transport system. The polypeptide is Methionine import ATP-binding protein MetN 2 (Pseudomonas syringae pv. syringae (strain B728a)).